A 121-amino-acid chain; its full sequence is Small ribosomal subunit protein bS21m (121 aa).

A mitochondrion-targeting transit peptide spans 1 to 14 (MNSSYFPGVLGVRW).

Belongs to the bacterial ribosomal protein bS21 family. In terms of assembly, component of the mitochondrial small ribosomal subunit (mt-SSU). Mature yeast 74S mitochondrial ribosomes consist of a small (37S) and a large (54S) subunit. The 37S small subunit contains a 15S ribosomal RNA (15S mt-rRNA) and at least 32 different proteins. The 54S large subunit contains a 21S rRNA (21S mt-rRNA) and at least 45 different proteins.

It localises to the mitochondrion. In terms of biological role, component of the mitochondrial ribosome (mitoribosome), a dedicated translation machinery responsible for the synthesis of mitochondrial genome-encoded proteins, including at least some of the essential transmembrane subunits of the mitochondrial respiratory chain. The mitoribosomes are attached to the mitochondrial inner membrane and translation products are cotranslationally integrated into the membrane. The sequence is that of Small ribosomal subunit protein bS21m (mrp21) from Schizosaccharomyces pombe (strain 972 / ATCC 24843) (Fission yeast).